Here is a 169-residue protein sequence, read N- to C-terminus: Ribosome maturation factor RimM (169 aa).

The region spanning 91-167 is the PRC barrel domain; that stretch reads EGEYYFADLI…RIVIATDFAH (77 aa).

It belongs to the RimM family. Binds ribosomal protein uS19.

It is found in the cytoplasm. Its function is as follows. An accessory protein needed during the final step in the assembly of 30S ribosomal subunit, possibly for assembly of the head region. Essential for efficient processing of 16S rRNA. May be needed both before and after RbfA during the maturation of 16S rRNA. It has affinity for free ribosomal 30S subunits but not for 70S ribosomes. The protein is Ribosome maturation factor RimM of Erythrobacter litoralis (strain HTCC2594).